The following is a 733-amino-acid chain: Wall-associated receptor kinase 5 (733 aa).

The N-terminal stretch at 1-23 (MKVHSLFLMAIFFYLAYTQLVKA) is a signal peptide. Residues 24–330 (QPRDDCQTRC…IDTPKEEPKY (307 aa)) are Extracellular-facing. N-linked (GlcNAc...) asparagine glycosylation is found at Asn57, Asn77, Asn110, Asn137, Asn184, Asn206, Asn218, Asn232, and Asn247. The region spanning 231–278 (GNQTCEQVVGRNICGGNSTCFDSTRGKGYNCKCLQGFDGNPYLSDGCQ) is the EGF-like 1 domain. 6 disulfide bridges follow: Cys235–Cys250, Cys244–Cys261, Cys263–Cys277, Cys283–Cys296, Cys290–Cys305, and Cys307–Cys320. One can recognise an EGF-like 2; calcium-binding domain in the interval 279–321 (DINECTTRIHNCSDTSTCENTLGSFHCQCPSGSDLNTTTMSCI). Residue Asn289 is glycosylated (N-linked (GlcNAc...) asparagine). Asn314 carries an N-linked (GlcNAc...) asparagine glycan. The helical transmembrane segment at 331-351 (LGWTTVLLGTTIGFLIILLTI) threads the bilayer. The Cytoplasmic portion of the chain corresponds to 352 to 733 (SYIQQKMRHR…VTRLDIETGR (382 aa)). Thr397 bears the Phosphothreonine mark. A Protein kinase domain is found at 408-691 (YNESRILGQG…RVKTTKHQWS (284 aa)). Residues 414–422 (LGQGGQGTV) and Lys436 contribute to the ATP site. Tyr481 carries the phosphotyrosine modification. Asp533 (proton acceptor) is an active-site residue. Residues Thr567 and Thr572 each carry the phosphothreonine modification. Tyr580 carries the phosphotyrosine modification.

It belongs to the protein kinase superfamily. Ser/Thr protein kinase family. As to expression, predominantly expressed in green tissues such as stems and leaves.

The protein resides in the membrane. It carries out the reaction L-seryl-[protein] + ATP = O-phospho-L-seryl-[protein] + ADP + H(+). It catalyses the reaction L-threonyl-[protein] + ATP = O-phospho-L-threonyl-[protein] + ADP + H(+). Functionally, serine/threonine-protein kinase that may function as a signaling receptor of extracellular matrix component. Binding to pectin may have significance in the control of cell expansion, morphogenesis and development. In Arabidopsis thaliana (Mouse-ear cress), this protein is Wall-associated receptor kinase 5 (WAK5).